Consider the following 155-residue polypeptide: Small ribosomal subunit protein uS7 (155 aa).

Belongs to the universal ribosomal protein uS7 family. Part of the 30S ribosomal subunit. Contacts proteins S9 and S11.

Its function is as follows. One of the primary rRNA binding proteins, it binds directly to 16S rRNA where it nucleates assembly of the head domain of the 30S subunit. Is located at the subunit interface close to the decoding center, probably blocks exit of the E-site tRNA. The protein is Small ribosomal subunit protein uS7 of Thermotoga neapolitana (strain ATCC 49049 / DSM 4359 / NBRC 107923 / NS-E).